The sequence spans 492 residues: Trehalose-6-phosphate synthase (492 aa).

R25 is a binding site for D-glucose 6-phosphate. 45–46 (GG) is a binding site for UDP-alpha-D-glucose. Residues Y101 and D155 each contribute to the D-glucose 6-phosphate site. Residues R297 and K302 each coordinate UDP-alpha-D-glucose. D-glucose 6-phosphate is bound at residue R335. 400-404 (LVAKE) is a UDP-alpha-D-glucose binding site.

Belongs to the glycosyltransferase 20 family. In terms of assembly, homotetramer.

It catalyses the reaction ADP-alpha-D-glucose + D-glucose 6-phosphate = alpha,alpha-trehalose 6-phosphate + ADP + H(+). It carries out the reaction CDP-alpha-D-glucose + D-glucose 6-phosphate = alpha,alpha-trehalose 6-phosphate + CDP + H(+). The enzyme catalyses GDP-alpha-D-glucose + D-glucose 6-phosphate = alpha,alpha-trehalose 6-phosphate + GDP + H(+). The catalysed reaction is TDP-alpha-D-glucose + D-glucose 6-phosphate = 5-methyl-UDP + alpha,alpha-trehalose 6-phosphate + H(+). It catalyses the reaction D-glucose 6-phosphate + UDP-alpha-D-glucose = alpha,alpha-trehalose 6-phosphate + UDP + H(+). The protein operates within glycan biosynthesis; trehalose biosynthesis. In terms of biological role, probably involved in the osmoprotection via the biosynthesis of trehalose and in the production of glycogen and alpha-glucan via the TreS-Pep2 branch involved in the biosynthesis of maltose-1-phosphate (M1P). Catalyzes the transfer of glucose from UDP-glucose (UDP-Glc) to D-glucose 6-phosphate (Glc-6-P) to form trehalose-6-phosphate. Probably also able to use ADP-Glc, CDP-Glc, GDP-Glc and TDP-Glc as glucosyl donors. The polypeptide is Trehalose-6-phosphate synthase (Mycobacterium avium (strain 104)).